The chain runs to 181 residues: Bifunctional protein PyrR (181 aa).

Residues 101 to 113 (VILVDDVLFTGRT) carry the PRPP-binding motif.

The protein belongs to the purine/pyrimidine phosphoribosyltransferase family. PyrR subfamily.

The enzyme catalyses UMP + diphosphate = 5-phospho-alpha-D-ribose 1-diphosphate + uracil. Functionally, regulates the transcription of the pyrimidine nucleotide (pyr) operon in response to exogenous pyrimidines. Also displays a weak uracil phosphoribosyltransferase activity which is not physiologically significant. The protein is Bifunctional protein PyrR of Desulfosudis oleivorans (strain DSM 6200 / JCM 39069 / Hxd3) (Desulfococcus oleovorans).